The primary structure comprises 430 residues: Serine--tRNA ligase (430 aa).

237-239 (TAE) lines the L-serine pocket. 268-270 (RSE) is an ATP binding site. E291 contacts L-serine. 355-358 (EISS) contributes to the ATP binding site. S391 provides a ligand contact to L-serine.

Belongs to the class-II aminoacyl-tRNA synthetase family. Type-1 seryl-tRNA synthetase subfamily. Homodimer. The tRNA molecule binds across the dimer.

It localises to the cytoplasm. It carries out the reaction tRNA(Ser) + L-serine + ATP = L-seryl-tRNA(Ser) + AMP + diphosphate + H(+). It catalyses the reaction tRNA(Sec) + L-serine + ATP = L-seryl-tRNA(Sec) + AMP + diphosphate + H(+). Its pathway is aminoacyl-tRNA biosynthesis; selenocysteinyl-tRNA(Sec) biosynthesis; L-seryl-tRNA(Sec) from L-serine and tRNA(Sec): step 1/1. In terms of biological role, catalyzes the attachment of serine to tRNA(Ser). Is also able to aminoacylate tRNA(Sec) with serine, to form the misacylated tRNA L-seryl-tRNA(Sec), which will be further converted into selenocysteinyl-tRNA(Sec). This is Serine--tRNA ligase from Yersinia enterocolitica serotype O:8 / biotype 1B (strain NCTC 13174 / 8081).